A 289-amino-acid chain; its full sequence is MMLPEACVATILSFTTPADTISSAAVSSVFRVAGDSDFVWEKFLPTDYCHVISRSTDPHRIFSSKKELYRCLCESILIDNGRKIFKIEKLSGKISYILSSRDLSITWSDQRHYWSWSPRSDSRFSEGVQLIMTDWLEIIGKIQTGALSPNTNYGAYLIMKVTSRAYGLDLVPAETSIKVGNGEKKIKSTYLSCLDNKKQQMERVFYGQREQRMATHEVVRSHRREPEVRDDGWMEIELGEFETGSGEGDDDKEVVMSLTEVKGYQLKGGIAIDGIEVRPKPLKVRAGTN.

Positions 1–43 (MMLPEACVATILSFTTPADTISSAAVSSVFRVAGDSDFVWEKF) constitute an F-box domain.

This is F-box protein PP2-B15 (PP2B15) from Arabidopsis thaliana (Mouse-ear cress).